We begin with the raw amino-acid sequence, 209 residues long: 3-dehydroquinate dehydratase (209 aa).

Residues serine 6, 25–27, and arginine 55 each bind 3-dehydroquinate; that span reads ELR. Histidine 109 serves as the catalytic Proton donor/acceptor. Residue lysine 134 is the Schiff-base intermediate with substrate of the active site. The 3-dehydroquinate site is built by arginine 172 and glutamine 195.

The protein belongs to the type-I 3-dehydroquinase family. In terms of assembly, homodimer.

It carries out the reaction 3-dehydroquinate = 3-dehydroshikimate + H2O. It participates in metabolic intermediate biosynthesis; chorismate biosynthesis; chorismate from D-erythrose 4-phosphate and phosphoenolpyruvate: step 3/7. Its function is as follows. Involved in the third step of the chorismate pathway, which leads to the biosynthesis of aromatic amino acids. Catalyzes the cis-dehydration of 3-dehydroquinate (DHQ) and introduces the first double bond of the aromatic ring to yield 3-dehydroshikimate. This chain is 3-dehydroquinate dehydratase, found in Methanoregula boonei (strain DSM 21154 / JCM 14090 / 6A8).